The sequence spans 503 residues: 2-phosphoxylose phosphatase 1 (503 aa).

Topologically, residues Met-1–Arg-6 are cytoplasmic. The chain crosses the membrane as a helical; Signal-anchor for type II membrane protein span at residues Phe-7 to Leu-27. The Lumenal segment spans residues His-28–Leu-503. Residues Gln-38 to Arg-63 form a disordered region. A glycan (N-linked (GlcNAc...) asparagine) is linked at Asn-73. The active-site Nucleophile is His-98. N-linked (GlcNAc...) asparagine glycosylation occurs at Asn-365. Asp-396 serves as the catalytic Proton donor. The N-linked (GlcNAc...) asparagine glycan is linked to Asn-490.

The protein belongs to the histidine acid phosphatase family.

The protein localises to the golgi apparatus membrane. The enzyme catalyses 3-O-[beta-D-GlcA-(1-&gt;3)-beta-D-Gal-(1-&gt;3)-beta-D-Gal-(1-&gt;4)-beta-D-2-O-P-Xyl]-L-seryl-[protein] + H2O = 3-O-(beta-D-GlcA-(1-&gt;3)-beta-D-Gal-(1-&gt;3)-beta-D-Gal-(1-&gt;4)-beta-D-Xyl)-L-seryl-[protein] + phosphate. In terms of biological role, responsible for the 2-O-dephosphorylation of xylose in the glycosaminoglycan-protein linkage region of proteoglycans thereby regulating the amount of mature glycosaminoglycan (GAG) chains. Sulfated glycosaminoglycans (GAGs), including heparan sulfate and chondroitin sulfate, are synthesized on the so-called common GAG-protein linkage region (GlcUAbeta1-3Galbeta1-3Galbeta1-4Xylbeta1-O-Ser) of core proteins, which is formed by the stepwise addition of monosaccharide residues by the respective specific glycosyltransferases. This Danio rerio (Zebrafish) protein is 2-phosphoxylose phosphatase 1.